Here is a 458-residue protein sequence, read N- to C-terminus: Elongation factor 1-alpha (458 aa).

At Gly2 the chain carries N,N,N-trimethylglycine; by EFM7. Position 3 is an N6,N6-dimethyllysine; by EFM7; alternate (Lys3). At Lys3 the chain carries N6-methyllysine; by EFM7; alternate. The 236-residue stretch at 5–240 (KSHINVVVIG…DAIEQPSRPT (236 aa)) folds into the tr-type G domain. Positions 14 to 21 (GHVDSGKS) are G1. Ser18 is subject to Phosphoserine. GTP contacts are provided by Ser21 and Thr22. Position 30 is an N6-methyllysine; by EFM1 (Lys30). The G2 stretch occupies residues 70-74 (GITID). Thr72 carries the phosphothreonine modification. Lys79 bears the N6,N6,N6-trimethyllysine; by EFM5 mark. Thr82 is subject to Phosphothreonine. The interval 91 to 94 (DAPG) is G3. Residues Asn153, Lys154, and Asp156 each coordinate GTP. The tract at residues 153–156 (NKMD) is G4. Phosphoserine is present on Ser163. The GTP site is built by Ser192, Gly193, and Trp194. The interval 192–194 (SGW) is G5. Residues Lys224, Lys242, and Lys253 each participate in a glycyl lysine isopeptide (Lys-Gly) (interchain with G-Cter in ubiquitin) cross-link. The residue at position 259 (Thr259) is a Phosphothreonine. A Glycyl lysine isopeptide (Lys-Gly) (interchain with G-Cter in ubiquitin) cross-link involves residue Lys271. Phosphoserine is present on Ser289. Lys316 carries the N6,N6-dimethyllysine; by EFM4; alternate modification. Lys316 carries the N6-methyllysine; by EFM4; alternate modification. The residue at position 390 (Lys390) is an N6-methyllysine; by EFM6. Lys393 participates in a covalent cross-link: Glycyl lysine isopeptide (Lys-Gly) (interchain with G-Cter in ubiquitin). The residue at position 414 (Ser414) is a Phosphoserine. Thr430 carries the phosphothreonine modification. Lys437 is covalently cross-linked (Glycyl lysine isopeptide (Lys-Gly) (interchain with G-Cter in ubiquitin)). Lys458 bears the Lysine methyl ester mark.

It belongs to the TRAFAC class translation factor GTPase superfamily. Classic translation factor GTPase family. EF-Tu/EF-1A subfamily. In terms of assembly, the eukaryotic elongation factor 1 complex (eEF1) is probably a heterohexamer. Two trimeric complexes, each composed of eEF1A (TEF1 or TEF2), eEF1Balpha (EFB1) and eEF1Bgamma (CAM1 or TEF4), are probably dimerized via the eF1Bgamma subunits. Interacts with eEF1Balpha; the interaction is direct. Interacts with GCN2 (via C-terminus); this interaction is direct, occurs in amino acid-repleted cells, may be stabilized in a ribosome-dependent manner, reduces GCN2-mediated eIF-2-alpha phosphorylation and is lost in amino acid-starved cells and by uncharged tRNAs. Interacts with CEX1. Interacts with elongation factor 3 (YEF3 or HEF3). Interacts with NAP1. Interacts with SRV2. Interacts with chaperone ZPR1; the interaction is required for its proper folding. Binds to actin and forms a ternary complex with BNI1 and profilin. Interacts with the proteasome, probably via RPT1. Associates with ribosomes. Post-translationally, S-thiolated in response to oxidative stress, probably inhibiting the protein and causing a reduction in protein synthesis. Glutaminylated at Glu-45. An L-glutamine is linked to Glu-45 via the alpha amino group. This glutaminylation is yeast-specific and not essential for the normal functions of eEF1A. However, eEF1A glutaminylation slightly reduced growth under antibiotic-induced translational stress conditions.

It localises to the cytoplasm. Its subcellular location is the cytoskeleton. Its pathway is protein biosynthesis; polypeptide chain elongation. Inhibited by narciclasine. Functionally, GTP-binding component of the eukaryotic elongation factor 1 complex (eEF1). In its active GTP-bound form, binds to and delivers aminoacyl-tRNA to the A-site of ribosomes during protein biosynthesis. In the presence of a correct codon-anticodon match between the aminoacyl-tRNA and the A-site codon of the ribosome-bound mRNA, the ribosome acts as a GTPase activator and the GTP is hydrolyzed. The inactive GDP-bound form leaves the ribosome and must be recycled by its guanine nucleotide exchange factor (GEF) (eEF1B subcomplex) before binding another molecule of aminoacyl-tRNA. Required for nuclear export of aminoacyl-tRNAs. May also be involved in translational quality control by targeting cotranslationally damaged proteins to the proteasome. Also exhibits actin filament-binding and -bundling activities and is involved in cytoskeleton organization. Plays a role as a negative regulator of GCN2 kinase activity by inhibiting GCN2-mediated eIF-2-alpha phosphorylation in amino acid-repleted cells. The polypeptide is Elongation factor 1-alpha (TEF1) (Saccharomyces cerevisiae (strain ATCC 204508 / S288c) (Baker's yeast)).